The primary structure comprises 391 residues: Inhibin beta B chain (391 aa).

Residues 1–25 (MDGAARRGVLAALLACGLLLLGAAA) form the signal peptide. Positions 26–276 (TPTPPPAGSS…ADNKHRIRKR (251 aa)) are excised as a propeptide. The disordered stretch occupies residues 27–47 (PTPPPAGSSPQDTCTSCGFRR). Asn77 carries N-linked (GlcNAc...) asparagine glycosylation. Disulfide bonds link Cys280-Cys288, Cys287-Cys356, Cys316-Cys388, and Cys320-Cys390.

It belongs to the TGF-beta family. Dimeric, linked by one or more disulfide bonds. Inhibin A is a dimer of alpha and beta-A. Inhibin B is a dimer of alpha and beta-B. Activin A is a homodimer of beta-A. Activin B is a homodimer of beta-B. Activin AB is a dimer of beta-A and beta-B.

The protein localises to the secreted. Inhibins and activins inhibit and activate, respectively, the secretion of follitropin by the pituitary gland. Inhibins/activins are involved in regulating a number of diverse functions such as hypothalamic and pituitary hormone secretion, gonadal hormone secretion, germ cell development and maturation, erythroid differentiation, insulin secretion, nerve cell survival, embryonic axial development or bone growth, depending on their subunit composition. Inhibins appear to oppose the functions of activins. This Gallus gallus (Chicken) protein is Inhibin beta B chain (INHBB).